The sequence spans 477 residues: Calcium/calmodulin-dependent protein kinase type 1G (477 aa).

The Protein kinase domain occupies 23–277 (FIFMEVLGSG…CEKALRHPWI (255 aa)). ATP contacts are provided by residues 29–37 (LGSGAFSEV) and K52. Residue D143 is the Proton acceptor of the active site. The segment at 277–317 (IDGNTALHRDIYPSVSLQIQKNFAKSKWRQAFNAAAVVHHM) is autoinhibitory domain. Positions 297 to 318 (KNFAKSKWRQAFNAAAVVHHMR) are calmodulin-binding. Residues 326–388 (SPSVRQEVEN…SRPSAPSGGR (63 aa)) are disordered. Low complexity predominate over residues 376 to 388 (SHSSRPSAPSGGR).

This sequence belongs to the protein kinase superfamily. CAMK Ser/Thr protein kinase family. CaMK subfamily. May be prenylated on Cys-474. Highly expressed in brain, in neuronal cell bodies of the central nucleus of amygdala and ventromedial hypothalamic nucleus. Also detected in heart, testis, and kidney.

It is found in the cytoplasm. The protein localises to the golgi apparatus membrane. The protein resides in the cell membrane. The catalysed reaction is L-seryl-[protein] + ATP = O-phospho-L-seryl-[protein] + ADP + H(+). The enzyme catalyses L-threonyl-[protein] + ATP = O-phospho-L-threonyl-[protein] + ADP + H(+). Its activity is regulated as follows. Activated by Ca(2+)/calmodulin. Binding of calmodulin is thought to result in a conformational change and leads to activation through phosphorylation by CAMKK1. Functionally, calcium/calmodulin-dependent protein kinase belonging to a proposed calcium-triggered signaling cascade. In vitro phosphorylates transcription factor CREB1. The polypeptide is Calcium/calmodulin-dependent protein kinase type 1G (Camk1g) (Mus musculus (Mouse)).